A 628-amino-acid chain; its full sequence is tRNA uridine 5-carboxymethylaminomethyl modification enzyme MnmG (628 aa).

FAD is bound at residue 14-19 (GAGHAG). 274–288 (GPRYCPSIEDKIVRF) contacts NAD(+).

This sequence belongs to the MnmG family. Homodimer. Heterotetramer of two MnmE and two MnmG subunits. It depends on FAD as a cofactor.

It localises to the cytoplasm. Its function is as follows. NAD-binding protein involved in the addition of a carboxymethylaminomethyl (cmnm) group at the wobble position (U34) of certain tRNAs, forming tRNA-cmnm(5)s(2)U34. The polypeptide is tRNA uridine 5-carboxymethylaminomethyl modification enzyme MnmG (Clostridium kluyveri (strain ATCC 8527 / DSM 555 / NBRC 12016 / NCIMB 10680 / K1)).